The primary structure comprises 173 residues: Peptide deformylase (173 aa).

Fe cation contacts are provided by Cys98 and His140. Glu141 is an active-site residue. Residue His144 coordinates Fe cation.

This sequence belongs to the polypeptide deformylase family. Fe(2+) serves as cofactor.

The catalysed reaction is N-terminal N-formyl-L-methionyl-[peptide] + H2O = N-terminal L-methionyl-[peptide] + formate. Removes the formyl group from the N-terminal Met of newly synthesized proteins. Requires at least a dipeptide for an efficient rate of reaction. N-terminal L-methionine is a prerequisite for activity but the enzyme has broad specificity at other positions. This chain is Peptide deformylase, found in Caulobacter sp. (strain K31).